A 165-amino-acid chain; its full sequence is Glutamyl-tRNA(Gln) amidotransferase subunit F, mitochondrial (165 aa).

A compositionally biased stretch (basic and acidic residues) spans 137–153 (VSDQRGERGFDTSELRT). The tract at residues 137–165 (VSDQRGERGFDTSELRTRINRAKSTAEKE) is disordered.

Belongs to the GatF family. Subunit of the heterotrimeric GatFAB amidotransferase (AdT) complex, composed of A, B and F subunits.

Its subcellular location is the mitochondrion inner membrane. It catalyses the reaction L-glutamyl-tRNA(Gln) + L-glutamine + ATP + H2O = L-glutaminyl-tRNA(Gln) + L-glutamate + ADP + phosphate + H(+). Allows the formation of correctly charged Gln-tRNA(Gln) through the transamidation of misacylated Glu-tRNA(Gln) in the mitochondria. The reaction takes place in the presence of glutamine and ATP through an activated gamma-phospho-Glu-tRNA(Gln). Required for proper protein synthesis within the mitochondrion. This Clavispora lusitaniae (strain ATCC 42720) (Yeast) protein is Glutamyl-tRNA(Gln) amidotransferase subunit F, mitochondrial.